We begin with the raw amino-acid sequence, 284 residues long: NADH-cytochrome b5 reductase 1 (284 aa).

The chain crosses the membrane as a helical span at residues 7–27 (KLVVVIVIVVVPLLFKFIIGP). The FAD-binding FR-type domain maps to 38–142 (NDFQSFPLVE…KGPRGNYHYE (105 aa)). 148–180 (HLGMIAGGTGIAPMYQIMKAIAMDSHDTTKVSL) is a binding site for FAD.

The protein belongs to the flavoprotein pyridine nucleotide cytochrome reductase family. As to quaternary structure, monomer. Component of the 2-(3-amino-3-carboxypropyl)histidine synthase complex composed of DPH1, DPH2, KTI11/DPH3 and a NADH-dependent reductase, predominantly CBR1. Interacts with KTI11/DPH3. Interacts with STE20. It depends on FAD as a cofactor.

It localises to the mitochondrion outer membrane. It catalyses the reaction 2 Fe(III)-[cytochrome b5] + NADH = 2 Fe(II)-[cytochrome b5] + NAD(+) + H(+). The catalysed reaction is 2 Fe(3+)-[Dph3] + NADH = 2 Fe(2+)-[Dph3] + NAD(+) + H(+). It participates in protein modification; peptidyl-diphthamide biosynthesis. Its activity is regulated as follows. Competitively inhibited by NAD(+). Inhibited by mercurials such as p-chloromercuribenzoate (PCMB) and HgCl(2). Enzymatic activity increases under anaerobic conditions. Its function is as follows. NADH-dependent reductase for KTI11/DPH3 and cytochrome b5. Required for the first step of diphthamide biosynthesis, a post-translational modification of histidine which occurs in elongation factor 2. DPH1 and DPH2 transfer a 3-amino-3-carboxypropyl (ACP) group from S-adenosyl-L-methionine (SAM) to a histidine residue, the reaction is assisted by a reduction system comprising KTI11/DPH3 and a NADH-dependent reductase, predominantly CBR1. By reducing KTI11/DPH3, also involved in the formation of the tRNA wobble base modification mcm5s 2U (5-methoxycarbonylmethyl-2-thiouridine), mediated by the elongator complex. The cytochrome b5/NADH cytochrome b5 reductase electron transfer system supports the catalytic activity of several sterol biosynthetic enzymes. Plays a role in bud morphology. The chain is NADH-cytochrome b5 reductase 1 (CBR1) from Saccharomyces cerevisiae (strain YJM789) (Baker's yeast).